A 303-amino-acid chain; its full sequence is Quinolinate synthase (303 aa).

Iminosuccinate contacts are provided by His24 and Ser41. Cys86 is a [4Fe-4S] cluster binding site. Iminosuccinate-binding positions include 112 to 114 (YVN) and Ser129. Cys172 contributes to the [4Fe-4S] cluster binding site. Iminosuccinate contacts are provided by residues 198–200 (HPE) and Thr215. Position 260 (Cys260) interacts with [4Fe-4S] cluster.

This sequence belongs to the quinolinate synthase family. Type 2 subfamily. It depends on [4Fe-4S] cluster as a cofactor.

Its subcellular location is the cytoplasm. The enzyme catalyses iminosuccinate + dihydroxyacetone phosphate = quinolinate + phosphate + 2 H2O + H(+). It participates in cofactor biosynthesis; NAD(+) biosynthesis; quinolinate from iminoaspartate: step 1/1. Functionally, catalyzes the condensation of iminoaspartate with dihydroxyacetone phosphate to form quinolinate. The chain is Quinolinate synthase from Clostridium kluyveri (strain NBRC 12016).